The following is a 133-amino-acid chain: ATP synthase epsilon chain (133 aa).

This sequence belongs to the ATPase epsilon chain family. As to quaternary structure, F-type ATPases have 2 components, CF(1) - the catalytic core - and CF(0) - the membrane proton channel. CF(1) has five subunits: alpha(3), beta(3), gamma(1), delta(1), epsilon(1). CF(0) has three main subunits: a, b and c.

The protein resides in the cell membrane. Its function is as follows. Produces ATP from ADP in the presence of a proton gradient across the membrane. The polypeptide is ATP synthase epsilon chain (Bacillus mycoides (strain KBAB4) (Bacillus weihenstephanensis)).